Here is a 479-residue protein sequence, read N- to C-terminus: Solute carrier family 7 member 13 (479 aa).

Residues Met1 to Gln14 lie on the Cytoplasmic side of the membrane. The helical transmembrane segment at Leu15–Val35 threads the bilayer. Residues Ser36–Asn47 are Extracellular-facing. The helical transmembrane segment at Val48 to Cys68 threads the bilayer. Residues Ala69–Cys89 lie on the Cytoplasmic side of the membrane. A helical membrane pass occupies residues Phe90–Leu110. Residues Ala111 to Cys129 are Extracellular-facing. The helical transmembrane segment at Ser130–Leu150 threads the bilayer. The Cytoplasmic portion of the chain corresponds to Asn151–Ser165. A helical membrane pass occupies residues Met166–Thr186. Residues Gly187 to Arg208 are Extracellular-facing. Residues Leu209–Val229 traverse the membrane as a helical segment. Over Ala230 to Arg242 the chain is Cytoplasmic. A helical transmembrane segment spans residues Cys243–Leu263. The Extracellular portion of the chain corresponds to Thr264 to Leu289. A helical transmembrane segment spans residues Thr290–Phe310. Residues Glu311–Pro338 lie on the Cytoplasmic side of the membrane. Residues Phe339–Ile359 traverse the membrane as a helical segment. Residue Glu360 is a topological domain, extracellular. A helical transmembrane segment spans residues Leu361 to Leu381. At Lys382–Val396 the chain is on the cytoplasmic side. Residues Phe397–Ile417 form a helical membrane-spanning segment. The Extracellular portion of the chain corresponds to Lys418 to Gln423. The helical transmembrane segment at Tyr424 to Phe444 threads the bilayer. Topologically, residues Lys445–Ser479 are cytoplasmic.

This sequence belongs to the amino acid-polyamine-organocation (APC) superfamily. Disulfide-linked heterodimer composed of the catalytic light subunit SLC7A13 and the heavy subunit SLC3A1.

The protein resides in the apical cell membrane. The catalysed reaction is L-cystine(out) + L-aspartate(in) = L-cystine(in) + L-aspartate(out). The enzyme catalyses L-cystine(out) = L-cystine(in). It catalyses the reaction L-aspartate(in) + L-glutamate(out) = L-aspartate(out) + L-glutamate(in). It carries out the reaction L-aspartate(in) + L-glutamine(out) = L-aspartate(out) + L-glutamine(in). The catalysed reaction is L-aspartate(in) + L-methionine(out) = L-aspartate(out) + L-methionine(in). The enzyme catalyses L-leucine(out) + L-aspartate(in) = L-leucine(in) + L-aspartate(out). It catalyses the reaction L-valine(out) + L-aspartate(in) = L-valine(in) + L-aspartate(out). It carries out the reaction L-aspartate(in) + L-phenylalanine(out) = L-aspartate(out) + L-phenylalanine(in). The catalysed reaction is L-tyrosine(out) + L-aspartate(in) = L-tyrosine(in) + L-aspartate(out). The enzyme catalyses L-tryptophan(out) + L-aspartate(in) = L-tryptophan(in) + L-aspartate(out). Associates with SLC3A1/rBAT to form a functional heterodimeric complex that transports anionic and neutral amino acids across the apical plasma membrane of renal epithelium. Preferentially mediates exchange transport, but can also operate via facilitated diffusion. May act as a major transporter for L-cystine in late proximal tubules, ensuring its reabsorption from the luminal fluid in exchange for cytosolic L-glutamate or L-aspartate. The protein is Solute carrier family 7 member 13 (Slc7a13) of Rattus norvegicus (Rat).